A 299-amino-acid chain; its full sequence is Peroxisomal biogenesis factor 19 (299 aa).

Residues 1–61 form a disordered region; the sequence is MAAAEEGCGV…KRAPGDTAKD (61 aa). An N-acetylalanine modification is found at Ala-2. Residues 2-56 are docking to the peroxisome membrane and binding to PEX3; that stretch reads AAAEEGCGVGVEDDRELEELLESALDDFDKAKPSPEHAPTISAPDASGPQKRAPG. Residues 2 to 91 are necessary for PEX19 function on peroxisome biogenesis; the sequence is AAAEEGCGVG…QATAEFEKAM (90 aa). Over residues 12 to 27 the composition is skewed to acidic residues; it reads VEDDRELEELLESALD. Phosphoserine occurs at positions 35 and 66. Residue Thr-236 is modified to Phosphothreonine. A Cysteine methyl ester modification is found at Cys-296. A lipid anchor (S-farnesyl cysteine) is attached at Cys-296. Residues 297–299 constitute a propeptide, removed in mature form; that stretch reads LIM.

It belongs to the peroxin-19 family. In terms of assembly, interacts with a broad range of peroxisomal membrane proteins, including PEX3, PEX10, PEX11A, PEX11B, PEX12, PEX13, PEX14 and PEX16, PXMP2/PMP22, PXMP4/PMP24, SLC25A17/PMP34, ABCD1/ALDP, ABCD2/ALDRP, and ABCD3/PMP70. Also interacts with the tumor suppressor CDKN2A/p19ARF.

The protein localises to the cytoplasm. The protein resides in the peroxisome membrane. Its function is as follows. Necessary for early peroxisomal biogenesis. Acts both as a cytosolic chaperone and as an import receptor for peroxisomal membrane proteins (PMPs). Binds and stabilizes newly synthesized PMPs in the cytoplasm by interacting with their hydrophobic membrane-spanning domains, and targets them to the peroxisome membrane by binding to the integral membrane protein PEX3. Excludes CDKN2A from the nucleus and prevents its interaction with MDM2, which results in active degradation of TP53. The protein is Peroxisomal biogenesis factor 19 (Pex19) of Mus musculus (Mouse).